Here is a 341-residue protein sequence, read N- to C-terminus: Heat-inducible transcription repressor HrcA (341 aa).

The protein belongs to the HrcA family.

Functionally, negative regulator of class I heat shock genes (grpE-dnaK-dnaJ and groELS operons). Prevents heat-shock induction of these operons. The protein is Heat-inducible transcription repressor HrcA of Corynebacterium jeikeium (strain K411).